A 120-amino-acid polypeptide reads, in one-letter code: Large ribosomal subunit protein uL18 (120 aa).

Belongs to the universal ribosomal protein uL18 family. As to quaternary structure, part of the 50S ribosomal subunit; part of the 5S rRNA/L5/L18/L25 subcomplex. Contacts the 5S and 23S rRNAs.

This is one of the proteins that bind and probably mediate the attachment of the 5S RNA into the large ribosomal subunit, where it forms part of the central protuberance. This is Large ribosomal subunit protein uL18 from Clostridium novyi (strain NT).